Reading from the N-terminus, the 260-residue chain is Flavin-dependent thymidylate synthase (260 aa).

The 202-residue stretch at 1-202 (MKIKLVSYSK…PRLFKYAGPN (202 aa)) folds into the ThyX domain. FAD is bound by residues Ser55, 79-81 (RHR), and Gln87. DUMP contacts are provided by residues 76 to 79 (QLVR), 87 to 91 (QMSHR), and Arg141. The ThyX motif motif lies at 79–89 (RHRIASYTQMS). Residues 157–159 (NAR) and Asn163 each bind FAD. Arg168 contacts dUMP. Arg168 serves as the catalytic Involved in ionization of N3 of dUMP, leading to its activation.

Belongs to the thymidylate synthase ThyX family. In terms of assembly, homotetramer. FAD serves as cofactor.

The enzyme catalyses dUMP + (6R)-5,10-methylene-5,6,7,8-tetrahydrofolate + NADPH + H(+) = dTMP + (6S)-5,6,7,8-tetrahydrofolate + NADP(+). The protein operates within pyrimidine metabolism; dTTP biosynthesis. Catalyzes the reductive methylation of 2'-deoxyuridine-5'-monophosphate (dUMP) to 2'-deoxythymidine-5'-monophosphate (dTMP) while utilizing 5,10-methylenetetrahydrofolate (mTHF) as the methyl donor, and NADPH and FADH(2) as the reductant. The chain is Flavin-dependent thymidylate synthase from Sulfolobus acidocaldarius (strain ATCC 33909 / DSM 639 / JCM 8929 / NBRC 15157 / NCIMB 11770).